Here is a 20-residue protein sequence, read N- to C-terminus: Toxin b subunit beta (20 aa).

In terms of assembly, toxin b is a heterodimer composed of toxin alpha and toxin beta. Expressed by the venom gland.

The protein resides in the secreted. Binds to sodium channels (Nav) and affects the channel activation process. This Androctonus crassicauda (Arabian fat-tailed scorpion) protein is Toxin b subunit beta.